The following is a 236-amino-acid chain: uncharacterized protein (236 aa).

A helical transmembrane segment spans residues 15 to 34; the sequence is GGMAHIISEAVIAGSIGLYF. Residues 36–71 are a coiled coil; sequence KKISALEQTVQELQSQLEVQNNQLQWLIQQQTRRLA. Disordered stretches follow at residues 83 to 113 and 185 to 236; these read SPLP…FQFK and ATTQ…IDCE. Polar residues-rich tracts occupy residues 93 to 102 and 185 to 195; these read QQSTTTNAAG and ATTQVSTFSKP. Positions 225–236 are enriched in basic and acidic residues; that stretch reads ALDKILNDIDCE.

The protein resides in the membrane. This is an uncharacterized protein from Aedes vexans (Inland floodwater mosquito).